The primary structure comprises 256 residues: Ubiquinone/menaquinone biosynthesis C-methyltransferase UbiE (256 aa).

S-adenosyl-L-methionine contacts are provided by threonine 78 and aspartate 99.

It belongs to the class I-like SAM-binding methyltransferase superfamily. MenG/UbiE family.

It carries out the reaction a 2-demethylmenaquinol + S-adenosyl-L-methionine = a menaquinol + S-adenosyl-L-homocysteine + H(+). It catalyses the reaction a 2-methoxy-6-(all-trans-polyprenyl)benzene-1,4-diol + S-adenosyl-L-methionine = a 5-methoxy-2-methyl-3-(all-trans-polyprenyl)benzene-1,4-diol + S-adenosyl-L-homocysteine + H(+). It functions in the pathway quinol/quinone metabolism; menaquinone biosynthesis; menaquinol from 1,4-dihydroxy-2-naphthoate: step 2/2. The protein operates within cofactor biosynthesis; ubiquinone biosynthesis. In terms of biological role, methyltransferase required for the conversion of demethylmenaquinol (DMKH2) to menaquinol (MKH2) and the conversion of 2-polyprenyl-6-methoxy-1,4-benzoquinol (DDMQH2) to 2-polyprenyl-3-methyl-6-methoxy-1,4-benzoquinol (DMQH2). The protein is Ubiquinone/menaquinone biosynthesis C-methyltransferase UbiE of Geobacter sulfurreducens (strain ATCC 51573 / DSM 12127 / PCA).